A 279-amino-acid polypeptide reads, in one-letter code: Thioredoxin-like 1-1, chloroplastic (279 aa).

A Thioredoxin domain is found at 56 to 202 (ALTERKARPL…FKDALAKHGP (147 aa)). Catalysis depends on nucleophile residues Cys-125 and Cys-128. A disulfide bond links Cys-125 and Cys-128.

Belongs to the thioredoxin family.

Probable thiol-disulfide oxidoreductase that may participate in various redox reactions. The protein is Thioredoxin-like 1-1, chloroplastic of Oryza sativa subsp. japonica (Rice).